The chain runs to 236 residues: Transcriptional activator protein SolR (236 aa).

The HTH luxR-type domain maps to 169 to 234 (VPESSAALTA…QAVVKAIAIG (66 aa)). The segment at residues 193 to 212 (AYEIGQILRISERTVNFHVN) is a DNA-binding region (H-T-H motif).

Belongs to the autoinducer-regulated transcriptional regulatory protein family.

This Ralstonia nicotianae (strain ATCC BAA-1114 / GMI1000) (Ralstonia solanacearum) protein is Transcriptional activator protein SolR (solR).